A 689-amino-acid chain; its full sequence is Glycine--tRNA ligase beta subunit (689 aa).

Belongs to the class-II aminoacyl-tRNA synthetase family. Tetramer of two alpha and two beta subunits.

The protein resides in the cytoplasm. It carries out the reaction tRNA(Gly) + glycine + ATP = glycyl-tRNA(Gly) + AMP + diphosphate. The polypeptide is Glycine--tRNA ligase beta subunit (Cronobacter sakazakii (strain ATCC BAA-894) (Enterobacter sakazakii)).